Here is a 204-residue protein sequence, read N- to C-terminus: Large ribosomal subunit protein uL4 (204 aa).

Residues 49-75 (TKGRSDVSGGGKKPWRQKGRGGARAGS) form a disordered region.

Belongs to the universal ribosomal protein uL4 family. Part of the 50S ribosomal subunit.

Its function is as follows. One of the primary rRNA binding proteins, this protein initially binds near the 5'-end of the 23S rRNA. It is important during the early stages of 50S assembly. It makes multiple contacts with different domains of the 23S rRNA in the assembled 50S subunit and ribosome. Forms part of the polypeptide exit tunnel. This chain is Large ribosomal subunit protein uL4, found in Campylobacter lari (strain RM2100 / D67 / ATCC BAA-1060).